The sequence spans 224 residues: Phosphoribosyltransferase domain-containing protein 1 (224 aa).

Mg(2+) contacts are provided by glutamate 140 and aspartate 141. GMP-binding positions include 140–148 (EDIINTGRT), lysine 172, 193–194 (FV), and aspartate 200. Aspartate 200 provides a ligand contact to Mg(2+).

This sequence belongs to the purine/pyrimidine phosphoribosyltransferase family.

This chain is Phosphoribosyltransferase domain-containing protein 1 (prtfdc1), found in Xenopus tropicalis (Western clawed frog).